The sequence spans 294 residues: Lycopene elongase/hydratase (294 aa).

8 consecutive transmembrane segments (helical) span residues 31-51 (FWLYLGGPVIVGVSYAADGPG), 53-73 (LFSPLAIALFLYFTIPGNVFL), 115-135 (LALLFALVLPTLGIVALLAWM), 160-180 (GLYILPGVIGYAAIEGVAPPA), 182-202 (AVVGAWLWAMGMHTFSAIPDI), 222-242 (TYYYCVMCWLMAAFVFNFTHW), 243-263 (VFGVLLLVYPGLVFGILGVGV), and 274-294 (AINTVVGMVFTLIALWVMLYG).

It belongs to the UbiA prenyltransferase family.

It localises to the cell membrane. It catalyses the reaction all-trans-lycopene + dimethylallyl diphosphate + H2O = dihydroisopentenyldehydrorhodopin + diphosphate. The enzyme catalyses isopentenyldehydrorhodopin + dimethylallyl diphosphate + H2O = dihydrobisanhydrobacterioruberin + diphosphate. Its pathway is carotenoid biosynthesis. In terms of biological role, involved in the biosynthesis of the acyclic C50 carotenoid bacterioruberin (BR). Acts as a bifunctional elongase/hydratase that catalyzes the elongation of lycopene by attaching a C(5) isoprene unit at C-2, as well as the hydroxylation of the previous end of the molecule. The enzyme acts at both ends of the substrate, and catalyzes the conversion of lycopene to the C(45) intermediate dihydroisopentenyldehydrorhodopin (DH-IDR) and the conversion of isopentenyldehydrorhodopin (IDR) to the C(50) carotenoid dihydrobisanhydrobacterioruberin (DH-BABR). Can also catalyze the conversion of lycopene to tetrahydrobisanhydrobacterioruberin (TH-BABR). The sequence is that of Lycopene elongase/hydratase from Haloarcula japonica (strain ATCC 49778 / DSM 6131 / JCM 7785 / NBRC 101032 / NCIMB 13157 / TR-1).